The primary structure comprises 436 residues: F-box protein SKIP16 (436 aa).

Residues 75–111 (RESFRMYPWNLVKRVRLCWDNLKQWLTLNFPEAKATL) enclose the F-box; degenerate domain. Residues 295–436 (VSVTNGVQVR…FPLELPDYIF (142 aa)) enclose the ApaG domain.

Part of a SCF (ASK-cullin-F-box) protein ligase complex. Interacts with SKP1A/ASK1, SKP1B/ASK2, ASK4, ASK11 and ASK13.

It functions in the pathway protein modification; protein ubiquitination. Component of SCF(ASK-cullin-F-box) E3 ubiquitin ligase complexes, which may mediate the ubiquitination and subsequent proteasomal degradation of target proteins. This chain is F-box protein SKIP16 (SKIP16), found in Arabidopsis thaliana (Mouse-ear cress).